The following is an 84-amino-acid chain: U8-theraphotoxin-Hhn1e (84 aa).

The N-terminal stretch at 1 to 21 (MKVVLLVCLVWMMAMMELVSC) is a signal peptide. Disulfide bonds link Cys-23–Cys-35, Cys-29–Cys-44, Cys-34–Cys-67, Cys-54–Cys-75, and Cys-69–Cys-81.

This sequence belongs to the AVIT (prokineticin) family. Expressed by the venom gland.

The protein localises to the secreted. This Cyriopagopus hainanus (Chinese bird spider) protein is U8-theraphotoxin-Hhn1e.